We begin with the raw amino-acid sequence, 576 residues long: Arginine--tRNA ligase (576 aa).

Residues 122-132 carry the 'HIGH' region motif; sequence PNVAKEMHVGH.

Belongs to the class-I aminoacyl-tRNA synthetase family. In terms of assembly, monomer.

It localises to the cytoplasm. It carries out the reaction tRNA(Arg) + L-arginine + ATP = L-arginyl-tRNA(Arg) + AMP + diphosphate. This is Arginine--tRNA ligase from Thermobifida fusca (strain YX).